The sequence spans 314 residues: tRNA dimethylallyltransferase (314 aa).

ATP is bound at residue 36-43; sequence GPTASGKT. 38-43 contributes to the substrate binding site; sequence TASGKT. The interaction with substrate tRNA stretch occupies residues 61–64; it reads DSVQ.

Belongs to the IPP transferase family. Monomer. Requires Mg(2+) as cofactor.

It catalyses the reaction adenosine(37) in tRNA + dimethylallyl diphosphate = N(6)-dimethylallyladenosine(37) in tRNA + diphosphate. In terms of biological role, catalyzes the transfer of a dimethylallyl group onto the adenine at position 37 in tRNAs that read codons beginning with uridine, leading to the formation of N6-(dimethylallyl)adenosine (i(6)A). In Sorangium cellulosum (strain So ce56) (Polyangium cellulosum (strain So ce56)), this protein is tRNA dimethylallyltransferase.